The primary structure comprises 389 residues: Chalcone synthase 1 (389 aa).

C164 is an active-site residue.

It belongs to the thiolase-like superfamily. Chalcone/stilbene synthases family.

It catalyses the reaction (E)-4-coumaroyl-CoA + 3 malonyl-CoA + 3 H(+) = 2',4,4',6'-tetrahydroxychalcone + 3 CO2 + 4 CoA. The protein operates within secondary metabolite biosynthesis; flavonoid biosynthesis. In terms of biological role, the primary product of this enzyme is 4,2',4',6'-tetrahydroxychalcone (also termed naringenin-chalcone or chalcone) which can under specific conditions spontaneously isomerize into naringenin. The polypeptide is Chalcone synthase 1 (CHS1) (Cicer arietinum (Chickpea)).